Consider the following 143-residue polypeptide: Nucleoside diphosphate kinase (143 aa).

Positions 11, 59, 87, 93, 104, and 114 each coordinate ATP. His-117 (pros-phosphohistidine intermediate) is an active-site residue.

Belongs to the NDK family. Homotetramer. It depends on Mg(2+) as a cofactor.

The protein resides in the cytoplasm. It carries out the reaction a 2'-deoxyribonucleoside 5'-diphosphate + ATP = a 2'-deoxyribonucleoside 5'-triphosphate + ADP. It catalyses the reaction a ribonucleoside 5'-diphosphate + ATP = a ribonucleoside 5'-triphosphate + ADP. In terms of biological role, major role in the synthesis of nucleoside triphosphates other than ATP. The ATP gamma phosphate is transferred to the NDP beta phosphate via a ping-pong mechanism, using a phosphorylated active-site intermediate. The polypeptide is Nucleoside diphosphate kinase (Sodalis glossinidius (strain morsitans)).